The chain runs to 348 residues: Phosphoribosylformylglycinamidine cyclo-ligase (348 aa).

The protein belongs to the AIR synthase family.

It localises to the cytoplasm. The catalysed reaction is 2-formamido-N(1)-(5-O-phospho-beta-D-ribosyl)acetamidine + ATP = 5-amino-1-(5-phospho-beta-D-ribosyl)imidazole + ADP + phosphate + H(+). It functions in the pathway purine metabolism; IMP biosynthesis via de novo pathway; 5-amino-1-(5-phospho-D-ribosyl)imidazole from N(2)-formyl-N(1)-(5-phospho-D-ribosyl)glycinamide: step 2/2. The sequence is that of Phosphoribosylformylglycinamidine cyclo-ligase from Geobacter sp. (strain M21).